The primary structure comprises 213 residues: Large ribosomal subunit protein uL1 (213 aa).

Belongs to the universal ribosomal protein uL1 family. In terms of assembly, part of the 50S ribosomal subunit.

Functionally, probably involved in E site tRNA release. Binds directly to 23S rRNA. In terms of biological role, protein L1 is also a translational repressor protein, it controls the translation of its operon by binding to its mRNA. This chain is Large ribosomal subunit protein uL1, found in Methanothermococcus thermolithotrophicus (Methanococcus thermolithotrophicus).